The sequence spans 365 residues: Dual-specificity RNA methyltransferase RlmN (365 aa).

Glu91 (proton acceptor) is an active-site residue. In terms of domain architecture, Radical SAM core spans 97 to 337; it reads ETSRGTLCIS…TTVRKTRGDD (241 aa). The cysteines at positions 104 and 342 are disulfide-linked. Positions 111, 115, and 118 each coordinate [4Fe-4S] cluster. S-adenosyl-L-methionine is bound by residues 168–169, Ser200, 222–224, and Asn299; these read GE and SLH. The S-methylcysteine intermediate role is filled by Cys342.

Belongs to the radical SAM superfamily. RlmN family. Requires [4Fe-4S] cluster as cofactor.

It localises to the cytoplasm. The enzyme catalyses adenosine(2503) in 23S rRNA + 2 reduced [2Fe-2S]-[ferredoxin] + 2 S-adenosyl-L-methionine = 2-methyladenosine(2503) in 23S rRNA + 5'-deoxyadenosine + L-methionine + 2 oxidized [2Fe-2S]-[ferredoxin] + S-adenosyl-L-homocysteine. The catalysed reaction is adenosine(37) in tRNA + 2 reduced [2Fe-2S]-[ferredoxin] + 2 S-adenosyl-L-methionine = 2-methyladenosine(37) in tRNA + 5'-deoxyadenosine + L-methionine + 2 oxidized [2Fe-2S]-[ferredoxin] + S-adenosyl-L-homocysteine. Its function is as follows. Specifically methylates position 2 of adenine 2503 in 23S rRNA and position 2 of adenine 37 in tRNAs. m2A2503 modification seems to play a crucial role in the proofreading step occurring at the peptidyl transferase center and thus would serve to optimize ribosomal fidelity. This is Dual-specificity RNA methyltransferase RlmN from Nitrosospira multiformis (strain ATCC 25196 / NCIMB 11849 / C 71).